A 461-amino-acid chain; its full sequence is Argininosuccinate lyase (461 aa).

The protein belongs to the lyase 1 family. Argininosuccinate lyase subfamily. Homotetramer.

The protein resides in the cytoplasm. The catalysed reaction is 2-(N(omega)-L-arginino)succinate = fumarate + L-arginine. It participates in amino-acid biosynthesis; L-arginine biosynthesis; L-arginine from L-ornithine and carbamoyl phosphate: step 3/3. The protein is Argininosuccinate lyase of Nostoc punctiforme (strain ATCC 29133 / PCC 73102).